The primary structure comprises 243 residues: MSANPLDQFRISTIFKLPDIGEYNIDFTNASLFMVLSTFLISLSCYVGLRKESVIPNPLQSIIEIIYDFIVSTIESNVGKEGLQYVPLVFTIFTFILVCNLLGILPLGFTVTSHIAVTFAISMIVFISVTFIGFKHQGTHFLHILLPQGTPMWLAPMMVLIELFAYCARPVSLSIRLAANMIAGHTIIKVIAGFVINMNIFLTPLPIAFIIILIGFEIFVAILQAYIFTVLTCVYLSDAVNKH.

The next 8 helical transmembrane spans lie at 29–49 (NASL…YVGL), 54–74 (VIPN…VSTI), 89–109 (VFTI…PLGF), 114–134 (HIAV…FIGF), 141–161 (FLHI…MVLI), 177–197 (LAAN…FVIN), 200–220 (IFLT…EIFV), and 221–241 (AILQ…DAVN).

Belongs to the ATPase A chain family. F-type ATPases have 2 components, CF(1) - the catalytic core - and CF(0) - the membrane proton channel. CF(1) has five subunits: alpha(3), beta(3), gamma(1), delta(1), epsilon(1). CF(0) has three main subunits: a(1), b(2) and c(9-12). The alpha and beta chains form an alternating ring which encloses part of the gamma chain. CF(1) is attached to CF(0) by a central stalk formed by the gamma and epsilon chains, while a peripheral stalk is formed by the delta and b chains.

The protein localises to the cell inner membrane. Key component of the proton channel; it plays a direct role in the translocation of protons across the membrane. In Ehrlichia ruminantium (strain Welgevonden), this protein is ATP synthase subunit a.